The sequence spans 126 residues: Holo-[acyl-carrier-protein] synthase (126 aa).

Mg(2+)-binding residues include Asp9 and Glu58.

Belongs to the P-Pant transferase superfamily. AcpS family. The cofactor is Mg(2+).

The protein resides in the cytoplasm. It carries out the reaction apo-[ACP] + CoA = holo-[ACP] + adenosine 3',5'-bisphosphate + H(+). Its function is as follows. Transfers the 4'-phosphopantetheine moiety from coenzyme A to a Ser of acyl-carrier-protein. This Vibrio campbellii (strain ATCC BAA-1116) protein is Holo-[acyl-carrier-protein] synthase.